The chain runs to 507 residues: Maturase K (507 aa).

The protein belongs to the intron maturase 2 family. MatK subfamily.

The protein resides in the plastid. The protein localises to the chloroplast. Usually encoded in the trnK tRNA gene intron. Probably assists in splicing its own and other chloroplast group II introns. This is Maturase K from Magnolia figo (Banana shrub).